The chain runs to 165 residues: Protein SprT (165 aa).

Residues 20 to 163 (EKLAQANLKL…RCVHCGEQLV (144 aa)) form the SprT-like domain. Position 78 (H78) interacts with Zn(2+). Residue E79 is part of the active site. H82 lines the Zn(2+) pocket.

It belongs to the SprT family. The cofactor is Zn(2+).

The protein resides in the cytoplasm. The sequence is that of Protein SprT from Escherichia coli (strain K12 / MC4100 / BW2952).